The primary structure comprises 642 residues: Bud site selection protein 5 (642 aa).

Residues 224–339 (EVFRIQLYLN…DIVQLFINKK (116 aa)) form the N-terminal Ras-GEF domain. The region spanning 412–640 (SPWSLAKTLT…YQVSIAKVPR (229 aa)) is the Ras-GEF domain.

In terms of assembly, interacts with AXL2, BEM1, GSP1 and in haploid cells with AXL1.

The protein localises to the bud neck. The protein resides in the cytoplasm. It localises to the cell cortex. GDP-GTP exchange factor (GEF) for the small GTPase BUD1/RSR1. Regulates the activity of BUD1 together with BUD2 which is a GTPase-activating protein (GAP) of BUD1. Required to produce both the axial and bipolar patterns of bud site selection. Determines the orientation of division axis. Overexpression can suppress mutations in PRP20 which is the GEF for GSP1. May be a cytoplasmic GEF for GSP1. Might also act on the Ras-like protein CDC42. Appears to bind to Ras proteins but not to activate them. The sequence is that of Bud site selection protein 5 (BUD5) from Saccharomyces cerevisiae (strain ATCC 204508 / S288c) (Baker's yeast).